Here is a 65-residue protein sequence, read N- to C-terminus: Large ribosomal subunit protein bL35 (65 aa).

Basic residues-rich tracts occupy residues 1 to 18 (MPKMKTKSAAAKRFKRTA), 31 to 44 (HRFHGKTKKQRRQL), and 55 to 65 (VKRYKKMIPAK). Residues 1 to 65 (MPKMKTKSAA…KRYKKMIPAK (65 aa)) form a disordered region.

The protein belongs to the bacterial ribosomal protein bL35 family.

The chain is Large ribosomal subunit protein bL35 from Limosilactobacillus fermentum (strain NBRC 3956 / LMG 18251) (Lactobacillus fermentum).